The sequence spans 588 residues: Synaptotagmin-3 (588 aa).

At 1 to 54 (MSGDYEDDLCRRALILVSDLCARIRDADTNDRCQEFNELRIRGYPRGPDADISV) the chain is on the vesicular side. The tract at residues 10-34 (CRRALILVSDLCARIRDADTNDRCQ) is cysteine motif. Residues 55-75 (SLLSVIVTFCGIVLLGVSLFV) traverse the membrane as a helical segment. The Cytoplasmic segment spans residues 76–588 (SWKLCWVPWR…KGLSEKENSE (513 aa)). Disordered stretches follow at residues 129–161 (GGPH…PEPS), 183–222 (PSQT…VTSL), and 238–257 (QTLT…ALPL). Positions 183 to 205 (PSQTSPELPSEGGTGSGLLLLPP) are enriched in low complexity. Polar residues predominate over residues 213 to 222 (AQSHQQVTSL). R286 is subject to Omega-N-methylarginine. C2 domains follow at residues 297 to 418 (PCGR…PLWR) and 429 to 563 (DLGE…EHWH). Positions 328, 334, 386, 387, 388, 391, 394, 460, 466, 520, and 522 each coordinate Ca(2+).

Belongs to the synaptotagmin family. As to quaternary structure, homodimer; disulfide-linked via the cysteine motif. Can also form heterodimers with SYT6, SYT9 and SYT10. Ca(2+) is required as a cofactor. In terms of tissue distribution, brain, various endocrine tissues and hormone-secreting clonal cells.

It localises to the cell membrane. The protein localises to the cytoplasmic vesicle. Its subcellular location is the secretory vesicle membrane. Ca(2+) sensor involved in Ca(2+)-dependent exocytosis of secretory vesicles through Ca(2+) and phospholipid binding to the C2 domain. Ca(2+) induces binding of the C2-domains to phospholipid membranes and to assembled SNARE-complexes; both actions contribute to triggering exocytosis. Plays a role in dendrite formation by melanocytes. This is Synaptotagmin-3 (Syt3) from Rattus norvegicus (Rat).